Reading from the N-terminus, the 287-residue chain is Homoserine kinase (287 aa).

Position 78–88 (78–88) interacts with ATP; the sequence is PLAHGLGSSSS.

This sequence belongs to the GHMP kinase family. Homoserine kinase subfamily.

It localises to the cytoplasm. The catalysed reaction is L-homoserine + ATP = O-phospho-L-homoserine + ADP + H(+). It participates in amino-acid biosynthesis; L-threonine biosynthesis; L-threonine from L-aspartate: step 4/5. In terms of biological role, catalyzes the ATP-dependent phosphorylation of L-homoserine to L-homoserine phosphate. The polypeptide is Homoserine kinase (Lactobacillus acidophilus (strain ATCC 700396 / NCK56 / N2 / NCFM)).